A 92-amino-acid chain; its full sequence is Small ribosomal subunit protein uS19c (92 aa).

This sequence belongs to the universal ribosomal protein uS19 family.

Its subcellular location is the plastid. It localises to the chloroplast. In terms of biological role, protein S19 forms a complex with S13 that binds strongly to the 16S ribosomal RNA. This Porphyra purpurea (Red seaweed) protein is Small ribosomal subunit protein uS19c (rps19).